Consider the following 563-residue polypeptide: GTPase Obg (563 aa).

The region spanning 2 to 168 is the Obg domain; sequence SDFVDRVTVH…RDVILELKSI (167 aa). Residues 169-349 enclose the OBG-type G domain; that stretch reads ADVALVGFPS…LNWALADLVT (181 aa). GTP-binding positions include 175–182, 200–204, 221–224, 301–304, and 330–332; these read GFPSAGKS, FTTLV, DVPG, NKVD, and STA. Mg(2+)-binding residues include Ser-182 and Thr-202. The 87-residue stretch at 383 to 469 folds into the OCT domain; it reads DEGGNALDFT…DRAVEFDWDP (87 aa). The tract at residues 525-563 is disordered; sequence MMAERKAGHWADPSVDDDRHDETSLFGRGETADDEDVEQ.

The protein belongs to the TRAFAC class OBG-HflX-like GTPase superfamily. OBG GTPase family. In terms of assembly, monomer. Mg(2+) is required as a cofactor.

The protein localises to the cytoplasm. Its function is as follows. An essential GTPase which binds GTP, GDP and possibly (p)ppGpp with moderate affinity, with high nucleotide exchange rates and a fairly low GTP hydrolysis rate. Plays a role in control of the cell cycle, stress response, ribosome biogenesis and in those bacteria that undergo differentiation, in morphogenesis control. This Bifidobacterium adolescentis (strain ATCC 15703 / DSM 20083 / NCTC 11814 / E194a) protein is GTPase Obg.